We begin with the raw amino-acid sequence, 377 residues long: RIB43A-like with coiled-coils protein 2 (377 aa).

2 coiled-coil regions span residues 217–250 (NKNQ…LRGD) and 282–308 (EEIR…RDMD).

The protein belongs to the RIB43A family. As to quaternary structure, microtubule inner protein component of sperm flagellar doublet microtubules. Expressed in trachea multiciliated cells.

The protein localises to the cytoplasm. It is found in the cytoskeleton. The protein resides in the cilium axoneme. It localises to the flagellum axoneme. Its function is as follows. Microtubule inner protein (MIP) part of the dynein-decorated doublet microtubules (DMTs) in cilia axoneme, which is required for motile cilia beating. The polypeptide is RIB43A-like with coiled-coils protein 2 (Bos taurus (Bovine)).